A 602-amino-acid polypeptide reads, in one-letter code: Type 2 DNA topoisomerase 6 subunit B (602 aa).

ATP is bound by residues Asn40, Asp71, Ser92–Arg93, Gly102–Ser109, and Lys425.

It belongs to the TOP6B family. In terms of assembly, homodimer. Heterotetramer of two Top6A and two Top6B chains.

It carries out the reaction ATP-dependent breakage, passage and rejoining of double-stranded DNA.. Functionally, relaxes both positive and negative superturns and exhibits a strong decatenase activity. The polypeptide is Type 2 DNA topoisomerase 6 subunit B (Archaeoglobus fulgidus (strain ATCC 49558 / DSM 4304 / JCM 9628 / NBRC 100126 / VC-16)).